The following is a 236-amino-acid chain: Leucyl/phenylalanyl-tRNA--protein transferase (236 aa).

Belongs to the L/F-transferase family.

It localises to the cytoplasm. It catalyses the reaction N-terminal L-lysyl-[protein] + L-leucyl-tRNA(Leu) = N-terminal L-leucyl-L-lysyl-[protein] + tRNA(Leu) + H(+). The catalysed reaction is N-terminal L-arginyl-[protein] + L-leucyl-tRNA(Leu) = N-terminal L-leucyl-L-arginyl-[protein] + tRNA(Leu) + H(+). It carries out the reaction L-phenylalanyl-tRNA(Phe) + an N-terminal L-alpha-aminoacyl-[protein] = an N-terminal L-phenylalanyl-L-alpha-aminoacyl-[protein] + tRNA(Phe). In terms of biological role, functions in the N-end rule pathway of protein degradation where it conjugates Leu, Phe and, less efficiently, Met from aminoacyl-tRNAs to the N-termini of proteins containing an N-terminal arginine or lysine. In Aliivibrio salmonicida (strain LFI1238) (Vibrio salmonicida (strain LFI1238)), this protein is Leucyl/phenylalanyl-tRNA--protein transferase.